The following is a 562-amino-acid chain: MASSETRMNKAREKEEAIANGVKLRALQASLMQMKSSPSSNYSLRNPSSSSAASPASRPLPNLSAHDYPVFTPSYEDEPVSAFHHKNLTLSETWDEDGVGLVDGDTYLSDSYKTSTSRKTVMMPHQDSHHHVYTMSDALRSPPLHFYTTGRSNCGSVDFRSVSSCNDYNKQKGFDTKSLKSSNLVVPLTDSHSAVVSSQPRNRGGRVMSWLFPKLKKKQKSNSIFNSPSITEKSEEVSEVLKDSGSGVEKLKRELMEANRSRDAALTQVSEMKSSLGELSEKLQYLESYCDNLKKALREATEVVSQENSGGRSSGKKNSEMPVSEEVMVEGFLQIVSEARLSIKQFLKTLVSEIDEEDSTLIGNINTLLQPHNLSFTSKYSKIIQYHLEAIISQSVYQDFENCVFQKNGKPKLLDPEQDRQANFSSFASLRNLSWNEVLKKGTKYYSDEFSRFCDEKMSLIITTLNWTRPWSEQMLQAFFVAAKCVWLLHLLAFSFNPALGILRVEENREFESSFMEDMGADRQRSALSRGPARVKVMVMPGFYVLDRVLRCKVLCRYKSLG.

2 disordered regions span residues 29–61 (ASLMQMKSSPSSNYSLRNPSSSSAASPASRPLP) and 303–322 (VVSQENSGGRSSGKKNSEMP). Residues 36 to 61 (SSPSSNYSLRNPSSSSAASPASRPLP) are compositionally biased toward low complexity. The stretch at 246-306 (SGVEKLKREL…LREATEVVSQ (61 aa)) forms a coiled coil.

As to quaternary structure, interacts with IRK. As to expression, highly expressed in root tips, shoot apices and developing flowers.

In Arabidopsis thaliana (Mouse-ear cress), this protein is IRK-interacting protein.